Here is a 364-residue protein sequence, read N- to C-terminus: Protein Wnt-16 (364 aa).

Residues 1–29 (MDRAALLALPSLCALWAAVLSLLPCGTQG) form the signal peptide. 3 cysteine pairs are disulfide-bonded: cysteine 81–cysteine 92, cysteine 138–cysteine 146, and cysteine 148–cysteine 167. N-linked (GlcNAc...) asparagine glycosylation occurs at asparagine 142. A glycan (N-linked (GlcNAc...) asparagine) is linked at asparagine 188. 8 cysteine pairs are disulfide-bonded: cysteine 220–cysteine 234, cysteine 222–cysteine 229, cysteine 293–cysteine 324, cysteine 309–cysteine 319, cysteine 323–cysteine 363, cysteine 339–cysteine 354, cysteine 341–cysteine 351, and cysteine 346–cysteine 347. The O-palmitoleoyl serine; by PORCN moiety is linked to residue serine 226. Asparagine 310 carries an N-linked (GlcNAc...) asparagine glycan.

This sequence belongs to the Wnt family. In terms of processing, palmitoleoylation is required for efficient binding to frizzled receptors. Depalmitoleoylation leads to Wnt signaling pathway inhibition.

It localises to the secreted. Its subcellular location is the extracellular space. The protein resides in the extracellular matrix. In terms of biological role, ligand for members of the frizzled family of seven transmembrane receptors. Probable developmental protein. May be a signaling molecule which affects the development of discrete regions of tissues. Is likely to signal over only few cell diameters. The chain is Protein Wnt-16 (Wnt16) from Mus musculus (Mouse).